Reading from the N-terminus, the 178-residue chain is CASP-like protein 2A2 (178 aa).

Residues 1–22 (MDKTDQTAIDGSALELNRTEKT) lie on the Cytoplasmic side of the membrane. A helical membrane pass occupies residues 23-43 (VEAVLRVASMALSITGLVIMI). Residues 44–69 (KNSISNDFGSLSYSNLGAFMYLVGAN) lie on the Extracellular side of the membrane. A helical transmembrane segment spans residues 70–90 (GVCAAYSLLSALAILALPCPI). Over 91-96 (SKVQVR) the chain is Cytoplasmic. The helical transmembrane segment at 97 to 117 (TLFLLDQVVTYVVLAAGAVSA) threads the bilayer. Residues 118–145 (ETVYLAYYGNIPITWSSACDSYGIFCHK) are Extracellular-facing. Residues 146–166 (ALISVVFTFVVSLLYMLLSLI) form a helical membrane-spanning segment. At 167 to 178 (SSYRLFSRFEAP) the chain is on the cytoplasmic side.

Belongs to the Casparian strip membrane proteins (CASP) family. As to quaternary structure, homodimer and heterodimers.

The protein localises to the cell membrane. The sequence is that of CASP-like protein 2A2 from Arabidopsis lyrata subsp. lyrata (Lyre-leaved rock-cress).